Consider the following 952-residue polypeptide: Bromodomain testis-specific protein (952 aa).

Residues 26–132 form the Bromo 1 domain; sequence RLTNQLQFLQ…KLFMQKLSQM (107 aa). A compositionally biased stretch (basic and acidic residues) spans 141–150; that stretch reads GKERMKKDIQ. The segment at 141 to 168 is disordered; sequence GKERMKKDIQQKTAVSSAKEQTPSKSAE. Residues 151–167 show a composition bias toward polar residues; it reads QKTAVSSAKEQTPSKSA. Serine 186 carries the post-translational modification Phosphoserine. The Nuclear localization signal motif lies at 208–219; the sequence is KGVKRRADTTTP. Residues 209–257 are disordered; sequence GVKRRADTTTPTTSSAKASSESPPPLREAKPANAPVKENTVKSVLPDSQ. A compositionally biased stretch (low complexity) spans 216–229; sequence TTTPTTSSAKASSE. Positions 266–375 constitute a Bromo 2 domain; the sequence is VKVTEQLKHC…DVFEMHFAKI (110 aa). Disordered stretches follow at residues 392–420, 442–504, 607–746, and 850–930; these read SAKA…ERVQ, VPLR…NAKP, QLNC…GCQV, and KHLE…RREA. Residues 417–442 are a coiled coil; the sequence is ERVQRLAKLQEQLNAVHQQLQVLSQV. Over residues 445–463 the composition is skewed to basic residues; sequence RKLKKKNEKSKRAPKRKKV. An NET domain is found at 495 to 577; it reads KLEEEDNAKP…ACLRKRSLKP (83 aa). Positions 610–619 are enriched in basic residues; the sequence is CRKRQTKRPA. Residues 625–638 are compositionally biased toward pro residues; sequence PRPPLPPPPPPPPE. Residues 646–681 show a composition bias toward low complexity; that stretch reads SDSSSSSSSSGSGSSSSSSSSSGSGSSSSDSSSSDS. Polar residues predominate over residues 718 to 729; the sequence is SAETALVQQSTG. Positions 837–936 form a coiled coil; that stretch reads EKEVKARTQE…RREAMAGTID (100 aa). The span at 850 to 867 shows a compositional bias: basic and acidic residues; that stretch reads KHLEHSAKDPKVSQESQR. Over residues 874 to 883 the composition is skewed to polar residues; that stretch reads TPESSSNKVQ. Over residues 893-902 the composition is skewed to low complexity; it reads EQQQLPSPSE. Residues 911–930 are compositionally biased toward basic and acidic residues; the sequence is LLKDRNLAREKEQERRRREA.

This sequence belongs to the BET family. As to quaternary structure, interacts with the acetylated N-terminus of histone H1, H2, H3 and H4. Interacts with P-TEFb components CDK9 and CCNT1/cyclin-T1. Interacts with mRNA splicing machinery proteins SRSF2, DDX5, HNRNPK and TARDBP. Interacts with SMARCE1. Ubiquitinated in a SPOP-dependent manner, leading to proteasomal degradation.

The protein localises to the nucleus. Functionally, testis-specific chromatin protein that specifically binds histone H4 acetylated at 'Lys-5' and 'Lys-8' (H4K5ac and H4K8ac, respectively) and plays a key role in spermatogenesis. Required in late pachytene spermatocytes: plays a role in meiotic and post-meiotic cells by binding to acetylated histones at the promoter of specific meiotic and post-meiotic genes, facilitating their activation at the appropriate time. In the post-meiotic phase of spermatogenesis, binds to hyperacetylated histones and participates in their general removal from DNA. Also recognizes and binds a subset of butyrylated histones: able to bind histone H4 butyrylated at 'Lys-8' (H4K8ac), while it is not able to bind H4 butyrylated at 'Lys-5' (H4K5ac). Also acts as a component of the splicing machinery in pachytene spermatocytes and round spermatids and participates in 3'-UTR truncation of specific mRNAs in post-meiotic spermatids. Required for chromocenter organization, a structure comprised of peri-centromeric heterochromatin. This Rattus norvegicus (Rat) protein is Bromodomain testis-specific protein (Brdt).